The following is a 244-amino-acid chain: Krueppel-like factor 9 (244 aa).

Disordered stretches follow at residues 26 to 51 (EHGG…GDPG) and 79 to 143 (PSVC…EKRH). Positions 32-51 (EAERLRLPEREVTKEHGDPG) are enriched in basic and acidic residues. Phosphoserine is present on S122. Over residues 134–143 (KGKHASEKRH) the composition is skewed to basic residues. C2H2-type zinc fingers lie at residues 143–167 (HKCP…YRVH), 173–197 (FPCT…YRTH), and 203–225 (FRCP…ARRH).

This sequence belongs to the Sp1 C2H2-type zinc-finger protein family. In terms of assembly, interacts with ZZEF1.

The protein resides in the nucleus. Transcription factor that binds to GC box promoter elements. Selectively activates mRNA synthesis from genes containing tandem repeats of GC boxes but represses genes with a single GC box. Acts as an epidermal circadian transcription factor regulating keratinocyte proliferation. The protein is Krueppel-like factor 9 (Klf9) of Mus musculus (Mouse).